A 394-amino-acid chain; its full sequence is MKINLNFVKHESFGGVLLIIATILALLFQNGFLNHFYTEILRAEFTVGFRDFNLSKPLILWVNDGLMAIFFFVVGLELKREILQGELSKPSQIALPTIGALGGVILPAVIFWAFNHGNDFAIRGWAIPTATDIAFALGVLMLLGKRIPSSLKIFLLTLAIIDDLCAIVIIAIFYTTKLSFISFVIAGICLFALWVLNKFKVSKKSAYILVTLILWVSVLKSGVHATIAGVVAAFFIPMRDDSGKSLLVELEHDLQGITSYFILPVFAFVNAGVSLAGVQINQLLNSVGMGIFFGLLIGKQVGVFLFSYIFIKLGFAKLPEGSSWTQFYGVCILTGIGFTMSLFVNSLAYHDSNEFFHADKLGILLASFTAGVIGYIYLLVFSKVAKNHRKDNES.

11 helical membrane-spanning segments follow: residues 13-33 (FGGV…NGFL), 58-78 (LILW…GLEL), 93-113 (IALP…IFWA), 124-144 (GWAI…MLLG), 153-173 (IFLL…IAIF), 176-196 (TKLS…LWVL), 208-228 (ILVT…ATIA), 260-280 (YFIL…GVQI), 291-311 (IFFG…YIFI), 327-347 (FYGV…VNSL), and 361-381 (LGIL…LLVF).

It belongs to the NhaA Na(+)/H(+) (TC 2.A.33) antiporter family.

It localises to the cell inner membrane. It catalyses the reaction Na(+)(in) + 2 H(+)(out) = Na(+)(out) + 2 H(+)(in). Its function is as follows. Na(+)/H(+) antiporter that extrudes sodium in exchange for external protons. In Campylobacter fetus subsp. fetus (strain 82-40), this protein is Na(+)/H(+) antiporter NhaA 2.